Consider the following 424-residue polypeptide: MLEVAISDIQAREILDSRGYPTLYVKVITDAGTFGEACVPSGASTGIKEALELRDHDTSRYQGKGVLQALNNVKEVLLPVVQGVNIFDQILIDSIMVEADGTPNKEKLGANAILGISLAAAKAAAATLGQPFYRYVGGCFSHVLPCPMMNLINGGMHANNGLQFQEFMIRPIGATSIKEAVRMGADVFHTLKKLLNDKNLATGVGDEGGFAPQLKSNSEALDLLVLAIEKSGFQPGKEISLALDCAASSFYDTKTKTYEGKSYQEQVEILADLCDRYPIDSIEDGLAEEDFDGWDLLTAELGDAIQIVGDDLFVTNPELIAEGISKGRANAVLIKPNQIGTLTETSEAIQLAHNQGYTTILSHRSGETEDTTIADLAVAFNTGQIKTGSLSRSERIAKYNRLMAIEEELGPVGLFKDSNPFSGE.

A (2R)-2-phosphoglycerate-binding site is contributed by Gln-165. Glu-207 acts as the Proton donor in catalysis. Positions 244, 283, and 310 each coordinate Mg(2+). (2R)-2-phosphoglycerate contacts are provided by Lys-335, Arg-364, Ser-365, and Lys-386. The Proton acceptor role is filled by Lys-335.

Belongs to the enolase family. Mg(2+) is required as a cofactor.

It localises to the cytoplasm. The protein resides in the secreted. The protein localises to the cell surface. The catalysed reaction is (2R)-2-phosphoglycerate = phosphoenolpyruvate + H2O. It functions in the pathway carbohydrate degradation; glycolysis; pyruvate from D-glyceraldehyde 3-phosphate: step 4/5. Its function is as follows. Catalyzes the reversible conversion of 2-phosphoglycerate (2-PG) into phosphoenolpyruvate (PEP). It is essential for the degradation of carbohydrates via glycolysis. The polypeptide is Enolase (Chlamydia felis (strain Fe/C-56) (Chlamydophila felis)).